We begin with the raw amino-acid sequence, 441 residues long: Histidine--tRNA ligase (441 aa).

Belongs to the class-II aminoacyl-tRNA synthetase family. Homodimer.

It is found in the cytoplasm. The enzyme catalyses tRNA(His) + L-histidine + ATP = L-histidyl-tRNA(His) + AMP + diphosphate + H(+). This chain is Histidine--tRNA ligase, found in Synechococcus sp. (strain WH7803).